The following is a 258-amino-acid chain: uncharacterized protein (258 aa).

A run of 3 helical transmembrane segments spans residues 38-58 (VFGL…LFIA), 72-92 (ALIF…IIFI), and 111-131 (FLVI…MLWW).

It is found in the cell membrane. This is an uncharacterized protein from Mycoplasma pneumoniae (strain ATCC 29342 / M129 / Subtype 1) (Mycoplasmoides pneumoniae).